Consider the following 396-residue polypeptide: Argininosuccinate synthase (396 aa).

Residue 9–17 (AFSGGLDTT) participates in ATP binding. Y86 contributes to the L-citrulline binding site. G116 is a binding site for ATP. Positions 118, 122, and 123 each coordinate L-aspartate. Residue N122 coordinates L-citrulline. L-citrulline contacts are provided by R126, S172, S181, E254, and Y266.

Belongs to the argininosuccinate synthase family. Type 1 subfamily. Homotetramer.

Its subcellular location is the cytoplasm. It catalyses the reaction L-citrulline + L-aspartate + ATP = 2-(N(omega)-L-arginino)succinate + AMP + diphosphate + H(+). The protein operates within amino-acid biosynthesis; L-arginine biosynthesis; L-arginine from L-ornithine and carbamoyl phosphate: step 2/3. This Halobacterium salinarum (strain ATCC 700922 / JCM 11081 / NRC-1) (Halobacterium halobium) protein is Argininosuccinate synthase.